The primary structure comprises 667 residues: Autophagy-related protein 20 (667 aa).

Residues 1–94 (MKQKKNRFGS…DESFKSTRAN (94 aa)) form a disordered region. The segment covering 38–47 (SSSSRSSSTQ) has biased composition (low complexity). Over residues 55–67 (SLASVHTSDMHQS) the composition is skewed to polar residues. Acidic residues predominate over residues 76 to 85 (DDNPFLDQDD). In terms of domain architecture, PX spans 185-331 (KLINDRVQIL…DFLDPNNINW (147 aa)). Positions 222, 224, 248, and 297 each coordinate a 1,2-diacyl-sn-glycero-3-phospho-(1D-myo-inositol-3-phosphate). The segment at 524–562 (ELQRGVQPRNGNTASGASGNDESSVKKPQASKSQSSSYG) is disordered. The span at 532–545 (RNGNTASGASGNDE) shows a compositional bias: polar residues. Residues 549-560 (KKPQASKSQSSS) show a composition bias toward low complexity. Residues 588–652 (QTTMANLIKE…SKYLKDYAKK (65 aa)) adopt a coiled-coil conformation.

This sequence belongs to the sorting nexin family.

It localises to the endosome membrane. The protein resides in the preautophagosomal structure membrane. Its function is as follows. Required for cytoplasm to vacuole transport (Cvt), pexophagy and mitophagy. Also involved in endoplasmic reticulum-specific autophagic process and is essential for the survival of cells subjected to severe ER stress. Functions in protein retrieval from the endocytic pathway. This is Autophagy-related protein 20 (ATG20) from Vanderwaltozyma polyspora (strain ATCC 22028 / DSM 70294 / BCRC 21397 / CBS 2163 / NBRC 10782 / NRRL Y-8283 / UCD 57-17) (Kluyveromyces polysporus).